The sequence spans 76 residues: Kappa-scoloptoxin(15)-Ssd3a (76 aa).

The N-terminal stretch at M1 to S23 is a signal peptide.

Contains 2 disulfide bonds. Expressed by the venom gland.

The protein localises to the secreted. Functionally, acts as a voltage-gated potassium channel inhibitor. This Scolopendra dehaani (Thai centipede) protein is Kappa-scoloptoxin(15)-Ssd3a.